A 750-amino-acid chain; its full sequence is Ribosomal RNA large subunit methyltransferase K/L (750 aa).

The 112-residue stretch at 46–157 (TAYRLCLWSR…RGEAILSLDL (112 aa)) folds into the THUMP domain.

This sequence belongs to the methyltransferase superfamily. RlmKL family.

Its subcellular location is the cytoplasm. It catalyses the reaction guanosine(2445) in 23S rRNA + S-adenosyl-L-methionine = N(2)-methylguanosine(2445) in 23S rRNA + S-adenosyl-L-homocysteine + H(+). The enzyme catalyses guanosine(2069) in 23S rRNA + S-adenosyl-L-methionine = N(2)-methylguanosine(2069) in 23S rRNA + S-adenosyl-L-homocysteine + H(+). In terms of biological role, specifically methylates the guanine in position 2445 (m2G2445) and the guanine in position 2069 (m7G2069) of 23S rRNA. The sequence is that of Ribosomal RNA large subunit methyltransferase K/L from Pseudomonas syringae pv. tomato (strain ATCC BAA-871 / DC3000).